We begin with the raw amino-acid sequence, 364 residues long: Arabinose metabolism transcriptional repressor (364 aa).

One can recognise an HTH gntR-type domain in the interval 6-74 (LPKYLQLKQE…QGSGTFVSRP (69 aa)). Residues 34-53 (EHEIANQFQLSRHTVRQALG) constitute a DNA-binding region (H-T-H motif).

Its subcellular location is the cytoplasm. Functionally, transcriptional repressor of the arabinose utilization genes. This chain is Arabinose metabolism transcriptional repressor (araR), found in Geobacillus stearothermophilus (Bacillus stearothermophilus).